Here is a 393-residue protein sequence, read N- to C-terminus: NAD(P)H-quinone oxidoreductase subunit H, chloroplastic (393 aa).

The protein belongs to the complex I 49 kDa subunit family. In terms of assembly, NDH is composed of at least 16 different subunits, 5 of which are encoded in the nucleus.

The protein resides in the plastid. Its subcellular location is the chloroplast thylakoid membrane. It carries out the reaction a plastoquinone + NADH + (n+1) H(+)(in) = a plastoquinol + NAD(+) + n H(+)(out). It catalyses the reaction a plastoquinone + NADPH + (n+1) H(+)(in) = a plastoquinol + NADP(+) + n H(+)(out). Its function is as follows. NDH shuttles electrons from NAD(P)H:plastoquinone, via FMN and iron-sulfur (Fe-S) centers, to quinones in the photosynthetic chain and possibly in a chloroplast respiratory chain. The immediate electron acceptor for the enzyme in this species is believed to be plastoquinone. Couples the redox reaction to proton translocation, and thus conserves the redox energy in a proton gradient. The polypeptide is NAD(P)H-quinone oxidoreductase subunit H, chloroplastic (Nicotiana tomentosiformis (Tobacco)).